The following is a 406-amino-acid chain: Bifunctional enzyme IspD/IspF (406 aa).

The tract at residues 1–247 is 2-C-methyl-D-erythritol 4-phosphate cytidylyltransferase; it reads MSLIRVNGEA…ALFFNPAKDT (247 aa). The tract at residues 248–406 is 2-C-methyl-D-erythritol 2,4-cyclodiphosphate synthase; that stretch reads FIGMGFDTHA…HVSMRYKQKL (159 aa). A divalent metal cation is bound by residues Asp254 and His256. Residues 254–256 and 280–281 each bind 4-CDP-2-C-methyl-D-erythritol 2-phosphate; these read DTH and HS. His288 contributes to the a divalent metal cation binding site. 4-CDP-2-C-methyl-D-erythritol 2-phosphate is bound by residues 302 to 304, 307 to 311, 378 to 381, Phe385, and Lys388; these read DIG, FPDND, and TTME.

The protein in the N-terminal section; belongs to the IspD/TarI cytidylyltransferase family. IspD subfamily. It in the C-terminal section; belongs to the IspF family. Requires a divalent metal cation as cofactor.

It catalyses the reaction 2-C-methyl-D-erythritol 4-phosphate + CTP + H(+) = 4-CDP-2-C-methyl-D-erythritol + diphosphate. The enzyme catalyses 4-CDP-2-C-methyl-D-erythritol 2-phosphate = 2-C-methyl-D-erythritol 2,4-cyclic diphosphate + CMP. It participates in isoprenoid biosynthesis; isopentenyl diphosphate biosynthesis via DXP pathway; isopentenyl diphosphate from 1-deoxy-D-xylulose 5-phosphate: step 2/6. It functions in the pathway isoprenoid biosynthesis; isopentenyl diphosphate biosynthesis via DXP pathway; isopentenyl diphosphate from 1-deoxy-D-xylulose 5-phosphate: step 4/6. Functionally, bifunctional enzyme that catalyzes the formation of 4-diphosphocytidyl-2-C-methyl-D-erythritol from CTP and 2-C-methyl-D-erythritol 4-phosphate (MEP) (IspD), and catalyzes the conversion of 4-diphosphocytidyl-2-C-methyl-D-erythritol 2-phosphate (CDP-ME2P) to 2-C-methyl-D-erythritol 2,4-cyclodiphosphate (ME-CPP) with a corresponding release of cytidine 5-monophosphate (CMP) (IspF). This Helicobacter pylori (strain Shi470) protein is Bifunctional enzyme IspD/IspF.